A 275-amino-acid chain; its full sequence is Formamidopyrimidine-DNA glycosylase (275 aa).

Pro2 acts as the Schiff-base intermediate with DNA in catalysis. Glu3 (proton donor) is an active-site residue. The active-site Proton donor; for beta-elimination activity is the Lys58. DNA-binding residues include His91 and Arg110. The FPG-type zinc-finger motif lies at 238-272; sequence QVYGQTGKPCPRCGQAIVKLKVGGRGTHICPKCQK. The active-site Proton donor; for delta-elimination activity is Arg262.

The protein belongs to the FPG family. In terms of assembly, monomer. Zn(2+) is required as a cofactor.

The catalysed reaction is Hydrolysis of DNA containing ring-opened 7-methylguanine residues, releasing 2,6-diamino-4-hydroxy-5-(N-methyl)formamidopyrimidine.. It catalyses the reaction 2'-deoxyribonucleotide-(2'-deoxyribose 5'-phosphate)-2'-deoxyribonucleotide-DNA = a 3'-end 2'-deoxyribonucleotide-(2,3-dehydro-2,3-deoxyribose 5'-phosphate)-DNA + a 5'-end 5'-phospho-2'-deoxyribonucleoside-DNA + H(+). Involved in base excision repair of DNA damaged by oxidation or by mutagenic agents. Acts as a DNA glycosylase that recognizes and removes damaged bases. Has a preference for oxidized purines, such as 7,8-dihydro-8-oxoguanine (8-oxoG). Has AP (apurinic/apyrimidinic) lyase activity and introduces nicks in the DNA strand. Cleaves the DNA backbone by beta-delta elimination to generate a single-strand break at the site of the removed base with both 3'- and 5'-phosphates. This Streptococcus pyogenes serotype M18 (strain MGAS8232) protein is Formamidopyrimidine-DNA glycosylase.